We begin with the raw amino-acid sequence, 351 residues long: Histidinol-phosphate aminotransferase (351 aa).

The residue at position 214 (Lys-214) is an N6-(pyridoxal phosphate)lysine.

The protein belongs to the class-II pyridoxal-phosphate-dependent aminotransferase family. Histidinol-phosphate aminotransferase subfamily. It depends on pyridoxal 5'-phosphate as a cofactor.

It catalyses the reaction L-histidinol phosphate + 2-oxoglutarate = 3-(imidazol-4-yl)-2-oxopropyl phosphate + L-glutamate. Its pathway is amino-acid biosynthesis; L-histidine biosynthesis; L-histidine from 5-phospho-alpha-D-ribose 1-diphosphate: step 7/9. The chain is Histidinol-phosphate aminotransferase from Methanosphaerula palustris (strain ATCC BAA-1556 / DSM 19958 / E1-9c).